The following is a 307-amino-acid chain: MAMAEPQDPKKGDKKTAERRGGGWLSRIAPGVRGAFAKRETPENLWVKCPDTGEMIFRSDLEAALWVTPAGRHMRIGPEARFKFTFDDGQYEALPTPPVVEDPLKFSDGKPYKDRLVAARKATGEPDAMAIGYGKVGGVDAVVLVQDFAFMGGSLGMAAGEGFIAAAKAALERQVPMIAFTAAGGARMQEGALSLMQMARTTLAINELKDAALPYVVVLTDPTTGGVTASYAMLGDIHLAEPGALIGFAGPRVIEQTIRETLPPGFQRSEYLVEKGMVDRVTHRKELPEVLGSLLGTLMMGRKRQAA.

The tract at residues 1–26 (MAMAEPQDPKKGDKKTAERRGGGWLS) is disordered. The span at 7–21 (QDPKKGDKKTAERRG) shows a compositional bias: basic and acidic residues. A CoA carboxyltransferase N-terminal domain is found at 45–307 (LWVKCPDTGE…LMMGRKRQAA (263 aa)).

This sequence belongs to the AccD/PCCB family. In terms of assembly, acetyl-CoA carboxylase is a heterohexamer composed of biotin carboxyl carrier protein (AccB), biotin carboxylase (AccC) and two subunits each of ACCase subunit alpha (AccA) and ACCase subunit beta (AccD).

It localises to the cytoplasm. It catalyses the reaction N(6)-carboxybiotinyl-L-lysyl-[protein] + acetyl-CoA = N(6)-biotinyl-L-lysyl-[protein] + malonyl-CoA. It functions in the pathway lipid metabolism; malonyl-CoA biosynthesis; malonyl-CoA from acetyl-CoA: step 1/1. Its function is as follows. Component of the acetyl coenzyme A carboxylase (ACC) complex. Biotin carboxylase (BC) catalyzes the carboxylation of biotin on its carrier protein (BCCP) and then the CO(2) group is transferred by the transcarboxylase to acetyl-CoA to form malonyl-CoA. This chain is Acetyl-coenzyme A carboxylase carboxyl transferase subunit beta, found in Caulobacter vibrioides (strain ATCC 19089 / CIP 103742 / CB 15) (Caulobacter crescentus).